A 77-amino-acid polypeptide reads, in one-letter code: Immune protein Tsi2 (77 aa).

As to quaternary structure, forms a heterotetramer with Tse2 consisting of two Tse2 dimers and two Tsi2 dimers. Formation of the complex inactivates Tse2 enzymatic activity.

Functionally, immunity protein that plays a role in preventing early activation of toxin Tse2. Binds to a large surface of Tse2 and thereby occludes the active site to specifically inhibits Tse2. This chain is Immune protein Tsi2, found in Pseudomonas aeruginosa (strain ATCC 15692 / DSM 22644 / CIP 104116 / JCM 14847 / LMG 12228 / 1C / PRS 101 / PAO1).